The chain runs to 328 residues: Complex I intermediate-associated protein 30, mitochondrial (328 aa).

The N-terminal 24 residues, 1 to 24, are a transit peptide targeting the mitochondrion; that stretch reads MSSIHKLLTGIYIHKNFLRPRAAL. The span at 44–54 shows a compositional bias: polar residues; that stretch reads VTSVDRASQQG. The disordered stretch occupies residues 44-80; it reads VTSVDRASQQGKTEEGLQGHDHKEVALDAPSPDRTPE. Residues 55–69 are compositionally biased toward basic and acidic residues; the sequence is KTEEGLQGHDHKEVA. Ser-319 is subject to Phosphoserine.

Belongs to the CIA30 family. As to quaternary structure, part of the mitochondrial complex I assembly/MCIA complex that comprises at least the core subunits TMEM126B, NDUFAF1, ECSIT and ACAD9 and complement subunits such as COA1 and TMEM186. Interacts with ECSIT. Interacts with ACAD9. At early stages of complex I assembly, it is found in intermediate subcomplexes that contain different subunits including NDUFB6, NDUFA6, NDUFA9, NDUFS3, NDUFS7, ND1, ND2 and ND3. Interacts with TMEM70 and TMEM242.

The protein localises to the mitochondrion. It localises to the mitochondrion matrix. As part of the MCIA complex, involved in the assembly of the mitochondrial complex I. This Mus musculus (Mouse) protein is Complex I intermediate-associated protein 30, mitochondrial.